Consider the following 405-residue polypeptide: 4-hydroxy-3-methylbut-2-enyl diphosphate reductase (405 aa).

Cysteine 66 serves as a coordination point for [4Fe-4S] cluster. Histidine 96 contributes to the (2E)-4-hydroxy-3-methylbut-2-enyl diphosphate binding site. Histidine 96 lines the dimethylallyl diphosphate pocket. Histidine 96 provides a ligand contact to isopentenyl diphosphate. Cysteine 158 is a binding site for [4Fe-4S] cluster. Residue histidine 186 coordinates (2E)-4-hydroxy-3-methylbut-2-enyl diphosphate. Histidine 186 contacts dimethylallyl diphosphate. Histidine 186 contacts isopentenyl diphosphate. Glutamate 188 functions as the Proton donor in the catalytic mechanism. Threonine 251 is a (2E)-4-hydroxy-3-methylbut-2-enyl diphosphate binding site. A [4Fe-4S] cluster-binding site is contributed by cysteine 289. (2E)-4-hydroxy-3-methylbut-2-enyl diphosphate-binding residues include serine 318, serine 319, asparagine 320, and serine 380. Residues serine 318, serine 319, asparagine 320, and serine 380 each coordinate dimethylallyl diphosphate. Isopentenyl diphosphate contacts are provided by serine 318, serine 319, asparagine 320, and serine 380.

It belongs to the IspH family. [4Fe-4S] cluster serves as cofactor.

It catalyses the reaction isopentenyl diphosphate + 2 oxidized [2Fe-2S]-[ferredoxin] + H2O = (2E)-4-hydroxy-3-methylbut-2-enyl diphosphate + 2 reduced [2Fe-2S]-[ferredoxin] + 2 H(+). The catalysed reaction is dimethylallyl diphosphate + 2 oxidized [2Fe-2S]-[ferredoxin] + H2O = (2E)-4-hydroxy-3-methylbut-2-enyl diphosphate + 2 reduced [2Fe-2S]-[ferredoxin] + 2 H(+). It participates in isoprenoid biosynthesis; dimethylallyl diphosphate biosynthesis; dimethylallyl diphosphate from (2E)-4-hydroxy-3-methylbutenyl diphosphate: step 1/1. It functions in the pathway isoprenoid biosynthesis; isopentenyl diphosphate biosynthesis via DXP pathway; isopentenyl diphosphate from 1-deoxy-D-xylulose 5-phosphate: step 6/6. In terms of biological role, catalyzes the conversion of 1-hydroxy-2-methyl-2-(E)-butenyl 4-diphosphate (HMBPP) into a mixture of isopentenyl diphosphate (IPP) and dimethylallyl diphosphate (DMAPP). Acts in the terminal step of the DOXP/MEP pathway for isoprenoid precursor biosynthesis. The chain is 4-hydroxy-3-methylbut-2-enyl diphosphate reductase from Cyanothece sp. (strain PCC 7425 / ATCC 29141).